The following is a 472-amino-acid chain: Glutamate-1-semialdehyde 2,1-aminomutase 2, chloroplastic (472 aa).

A chloroplast-targeting transit peptide spans 1–36 (MAATLTGSGIALGFSCSAKFSKRASSSSNRRCIKMS). Lys312 carries the post-translational modification N6-(pyridoxal phosphate)lysine.

The protein belongs to the class-III pyridoxal-phosphate-dependent aminotransferase family. HemL subfamily. In terms of assembly, homodimer. Pyridoxal 5'-phosphate serves as cofactor. In terms of tissue distribution, expressed in leaf primordia and shoot apical meristems (SAM).

It is found in the plastid. Its subcellular location is the chloroplast. The catalysed reaction is (S)-4-amino-5-oxopentanoate = 5-aminolevulinate. The protein operates within porphyrin-containing compound metabolism; protoporphyrin-IX biosynthesis; 5-aminolevulinate from L-glutamyl-tRNA(Glu): step 2/2. It functions in the pathway porphyrin-containing compound metabolism; chlorophyll biosynthesis. In terms of biological role, transaminase converting glutamate 1-semialdehyde (GSA) to 5-aminolevulinate (ALA). Involved in the biosynthesis of tetrapyrroles. The chain is Glutamate-1-semialdehyde 2,1-aminomutase 2, chloroplastic from Arabidopsis thaliana (Mouse-ear cress).